We begin with the raw amino-acid sequence, 355 residues long: Anthranilate phosphoribosyltransferase (355 aa).

Residues Gly-85, 88 to 89 (GD), Thr-93, 95 to 98 (NIST), 113 to 121 (KHGNRAASS), and Ser-125 each bind 5-phospho-alpha-D-ribose 1-diphosphate. Gly-85 is a binding site for anthranilate. A Mg(2+)-binding site is contributed by Ser-97. Asn-116 is a binding site for anthranilate. Arg-171 is a binding site for anthranilate. The Mg(2+) site is built by Asp-229 and Glu-230.

The protein belongs to the anthranilate phosphoribosyltransferase family. As to quaternary structure, homodimer. Requires Mg(2+) as cofactor.

It catalyses the reaction N-(5-phospho-beta-D-ribosyl)anthranilate + diphosphate = 5-phospho-alpha-D-ribose 1-diphosphate + anthranilate. Its pathway is amino-acid biosynthesis; L-tryptophan biosynthesis; L-tryptophan from chorismate: step 2/5. In terms of biological role, catalyzes the transfer of the phosphoribosyl group of 5-phosphorylribose-1-pyrophosphate (PRPP) to anthranilate to yield N-(5'-phosphoribosyl)-anthranilate (PRA). This is Anthranilate phosphoribosyltransferase from Acidothermus cellulolyticus (strain ATCC 43068 / DSM 8971 / 11B).